The sequence spans 327 residues: Thiamine-monophosphate kinase (327 aa).

Residues Asp-30, Ser-45, Ser-46, and Asp-47 each coordinate Mg(2+). His-54 is a binding site for substrate. Asp-76 contributes to the Mg(2+) binding site. ATP is bound by residues Tyr-106, 123 to 124 (GD), and Arg-149. A Mg(2+)-binding site is contributed by Asp-124. Residue Asp-221 coordinates Mg(2+). Ser-223 provides a ligand contact to ATP. A Mg(2+)-binding site is contributed by Asp-224. Residues Glu-268 and Phe-321 each contribute to the substrate site.

This sequence belongs to the thiamine-monophosphate kinase family.

It carries out the reaction thiamine phosphate + ATP = thiamine diphosphate + ADP. It participates in cofactor biosynthesis; thiamine diphosphate biosynthesis; thiamine diphosphate from thiamine phosphate: step 1/1. Its function is as follows. Catalyzes the ATP-dependent phosphorylation of thiamine-monophosphate (TMP) to form thiamine-pyrophosphate (TPP), the active form of vitamin B1. The polypeptide is Thiamine-monophosphate kinase (Synechococcus elongatus (strain ATCC 33912 / PCC 7942 / FACHB-805) (Anacystis nidulans R2)).